The primary structure comprises 247 residues: Protein eak-4 (247 aa).

Residue G2 is the site of N-myristoyl glycine attachment.

In terms of tissue distribution, expressed in the 2 embryonic head hypodermal cells XXXL/R.

Its subcellular location is the cell membrane. Functionally, together with eak-6 and sdf-9, negatively regulates dauer larva formation downstream of the insulin-like receptor daf-2 and in parallel with age-1, pdk-1 and akt-1. This is Protein eak-4 from Caenorhabditis elegans.